The primary structure comprises 327 residues: Small ribosomal subunit protein uS2 (327 aa).

The tract at residues A258–E327 is disordered.

Belongs to the universal ribosomal protein uS2 family.

This Anaplasma marginale (strain St. Maries) protein is Small ribosomal subunit protein uS2.